The sequence spans 438 residues: 3-phosphoshikimate 1-carboxyvinyltransferase (438 aa).

The 3-phosphoshikimate site is built by Lys-21, Ser-22, and Arg-26. Lys-21 lines the phosphoenolpyruvate pocket. Phosphoenolpyruvate contacts are provided by Gly-95 and Arg-123. 3-phosphoshikimate is bound by residues Ser-167, Gln-169, Asp-315, and Lys-342. Gln-169 lines the phosphoenolpyruvate pocket. The active-site Proton acceptor is Asp-315. Phosphoenolpyruvate-binding residues include Arg-346 and Arg-387.

The protein belongs to the EPSP synthase family. Monomer.

Its subcellular location is the cytoplasm. The enzyme catalyses 3-phosphoshikimate + phosphoenolpyruvate = 5-O-(1-carboxyvinyl)-3-phosphoshikimate + phosphate. The protein operates within metabolic intermediate biosynthesis; chorismate biosynthesis; chorismate from D-erythrose 4-phosphate and phosphoenolpyruvate: step 6/7. Its function is as follows. Catalyzes the transfer of the enolpyruvyl moiety of phosphoenolpyruvate (PEP) to the 5-hydroxyl of shikimate-3-phosphate (S3P) to produce enolpyruvyl shikimate-3-phosphate and inorganic phosphate. In Coxiella burnetii (strain CbuG_Q212) (Coxiella burnetii (strain Q212)), this protein is 3-phosphoshikimate 1-carboxyvinyltransferase.